The following is a 671-amino-acid chain: Annexin A6 (671 aa).

Annexin repeat units lie at residues 18 to 89 (FNAS…SLMR), 90 to 161 (PPAY…VLLQ), 173 to 245 (DLVE…AVVK), 249 to 320 (STAE…KLCE), 361 to 432 (FNDD…GLML), 433 to 504 (TPAQ…SLAL), 519 to 594 (EDAK…AIVR), and 598 to 669 (NKPA…LCGG).

This sequence belongs to the annexin family.

It localises to the cytoplasm. The protein resides in the melanosome. Its function is as follows. May associate with CD21. May regulate the release of Ca(2+) from intracellular stores. This is Annexin A6 (ANXA6) from Gallus gallus (Chicken).